A 734-amino-acid polypeptide reads, in one-letter code: MTSFLTSRFGGLALRNVMNNKNGINSFGLRCFSTNSVSGLRNIGISAHIDSGKTTLTERILYYTGRIKEIHEVRGKDGVGAKMDSMDLEREKGITIQSAATYCKWGENHINIIDTPGHVDFTIEVERALRVLDGAVLVMCGVSGVQSQTITVDRQMRRYNVPRVVFINKLDRTGANPWNVIEQLRKKLNLNAIALQVPIGKESNLEGVIDLVTEKAMIFGEKGTAPIIEEIPSNFVEFVKEKKMELVETIANVDDELGEWMIENDFPNNMPDEKTLTAAIRRTTIARKVVPVMMGSAFKNTGVQPLLDGVIKYLPSPNEKKIIALDTSVKDKETEVELESDPKKPFVGLAFKLEEGRFGQLTYMRVYQGTLKRGDTIKNVNLGKTIKVPRLVKMHASEMEEVSEVGPGEICAMFGVDCYSGNTFTHQNCSYTMTSMHVPEPVMSLSIQPKSKDGQANFSKALSKFQKEDPTFRVKSDQESGQIIISGMGELHLEIYVERMKREYNVETVTGKPLVAYRETIQQRGDYNFTHRKQSGGQGQYAKMIGFAEQSENGMENEFVNDVIGTAIPPTFIEAIKKGFKDCIEKGPLIGHPVVGVKFVVSDGNTHSVDSSELAFRIATAGAFKEAFEDGEPTILEPIMKVEISLPQEFQGTVISGVNRRKGAIVNTTTQGESLTFECEVPLNNMFGYSTELRSMTQGKGEFSMEYLKHTNVSRELYNQLLEEYKKKRTEENK.

A mitochondrion-targeting transit peptide spans 1 to 32; sequence MTSFLTSRFGGLALRNVMNNKNGINSFGLRCF. The region spanning 38-318 is the tr-type G domain; sequence SGLRNIGISA…GVIKYLPSPN (281 aa). Residues 47–54, 114–118, and 168–171 each bind GTP; these read AHIDSGKT, DTPGH, and NKLD.

It belongs to the TRAFAC class translation factor GTPase superfamily. Classic translation factor GTPase family. EF-G/EF-2 subfamily.

It localises to the mitochondrion. It catalyses the reaction GTP + H2O = GDP + phosphate + H(+). Its pathway is protein biosynthesis; polypeptide chain elongation. Its function is as follows. Mitochondrial GTPase that catalyzes the GTP-dependent ribosomal translocation step during translation elongation. During this step, the ribosome changes from the pre-translocational (PRE) to the post-translocational (POST) state as the newly formed A-site-bound peptidyl-tRNA and P-site-bound deacylated tRNA move to the P and E sites, respectively. Catalyzes the coordinated movement of the two tRNA molecules, the mRNA and conformational changes in the ribosome. In Dictyostelium discoideum (Social amoeba), this protein is Elongation factor G, mitochondrial (gfm1).